A 423-amino-acid polypeptide reads, in one-letter code: Adenosylmethionine-8-amino-7-oxononanoate aminotransferase (423 aa).

Tryptophan 51 is a substrate binding site. 111–112 (GS) lines the pyridoxal 5'-phosphate pocket. Tyrosine 144 contacts substrate. A pyridoxal 5'-phosphate-binding site is contributed by aspartate 243. Substrate-binding residues include lysine 272 and glycine 306. An N6-(pyridoxal phosphate)lysine modification is found at lysine 272. 307-308 (PT) is a binding site for pyridoxal 5'-phosphate. Arginine 390 is a substrate binding site.

It belongs to the class-III pyridoxal-phosphate-dependent aminotransferase family. BioA subfamily. As to quaternary structure, homodimer. The cofactor is pyridoxal 5'-phosphate.

It localises to the cytoplasm. The catalysed reaction is (8S)-8-amino-7-oxononanoate + S-adenosyl-L-methionine = S-adenosyl-4-methylsulfanyl-2-oxobutanoate + (7R,8S)-7,8-diammoniononanoate. The protein operates within cofactor biosynthesis; biotin biosynthesis; 7,8-diaminononanoate from 8-amino-7-oxononanoate (SAM route): step 1/1. Catalyzes the transfer of the alpha-amino group from S-adenosyl-L-methionine (SAM) to 7-keto-8-aminopelargonic acid (KAPA) to form 7,8-diaminopelargonic acid (DAPA). It is the only aminotransferase known to utilize SAM as an amino donor. The polypeptide is Adenosylmethionine-8-amino-7-oxononanoate aminotransferase (Corynebacterium glutamicum (strain ATCC 13032 / DSM 20300 / JCM 1318 / BCRC 11384 / CCUG 27702 / LMG 3730 / NBRC 12168 / NCIMB 10025 / NRRL B-2784 / 534)).